The following is a 161-amino-acid chain: uncharacterized protein (161 aa).

2 disordered regions span residues 1–67 (MNSN…IQNF) and 80–147 (DSHQ…KKKQ). The segment covering 84-126 (NFNDNGFNNNNNNNNSNMNHNFSNQNNYNNNNNNNNNNNSNFN) has biased composition (low complexity). Residues 135–147 (GTSSQVGNNKKKQ) show a composition bias toward polar residues.

This is an uncharacterized protein from Dictyostelium discoideum (Social amoeba).